The primary structure comprises 1804 residues: Collagen alpha-1(XI) chain (1804 aa).

The first 34 residues, 1 to 34 (MEPWSRWKTKRWIWDLTISTLALTFLFQAREVRG), serve as a signal peptide directing secretion. Residues 35–511 (AAPVDILKAL…SKGPTISAQE (477 aa)) constitute a propeptide, N-terminal propeptide. Intrachain disulfides connect Cys60-Cys242 and Cys181-Cys235. Residues 70–242 (DVAYRVTEEA…DYCDHYSPDC (173 aa)) form the Laminin G-like domain. Positions 229-417 (KAAYDYCDHY…DFTETSINGH (189 aa)) are nonhelical region. A compositionally biased stretch (polar residues) spans 315–329 (YQTETPRRVSGSNEP). Disordered stretches follow at residues 315–334 (YQTETPRRVSGSNEPNPVEE) and 433–506 (EPGM…KGPT). The triple-helical region (interrupted) stretch occupies residues 418-506 (GAYGEKGQKG…YGGDGSKGPT (89 aa)). The 49-residue stretch at 440 to 488 (GPPGPAGPAGLMGPPGLQGPSGLPGDPGDRGPPGRPGLPGADGLPGPPG) folds into the Collagen-like 1 domain. Composition is skewed to low complexity over residues 447 to 465 (PAGLMGPPGLQGPSGLPGD) and 477 to 494 (LPGADGLPGPPGTMLMLP). The short nonhelical segment stretch occupies residues 507-509 (ISA). The segment at 510-527 (QEAQAQAILQQARIALRG) is telopeptide. The segment at 526–1567 (RGPPGPMGLT…SIQGDAGDNI (1042 aa)) is disordered. 2 Collagen-like domains span residues 527–584 (GPPG…GADG) and 567–623 (PPGP…GPPG). The interval 528 to 1540 (PPGPMGLTGR…PGPPGPPGEV (1013 aa)) is triple-helical region. 2 stretches are compositionally biased toward gly residues: residues 539–548 (GPVGGPGSAG) and 581–590 (GADGGRGMPG). Lys610 carries the post-translational modification Allysine. The span at 639-655 (PRGLPGEAGPRGLLGPR) shows a compositional bias: low complexity. Positions 697–708 (QGLPGPQGPIGP) are enriched in pro residues. Positions 715–726 (QGKPGLAGLPGA) are enriched in low complexity. The Collagen-like 4 domain maps to 728–781 (GPPGHPGKEGQSGEKGALGPPGPQGPIGYPGPRGVKGADGVRGLKGSKGEKGED). Positions 805 to 814 (RGEDGPEGPK) are enriched in basic and acidic residues. Composition is skewed to low complexity over residues 873–901 (KPGPRGQRGPTGPRGSRGARGPTGKPGPK), 916–925 (RGPQGPQGPV), and 969–979 (PQGPTGETGPI). Positions 1040-1049 (GLKGGEGPQG) are enriched in gly residues. Pro residues predominate over residues 1074–1083 (RPGPQGPPGP). A compositionally biased stretch (low complexity) spans 1084–1108 (AGEKGAPGEKGPQGPAGRDGVQGPV). Over residues 1160–1169 (GIAGGDGEPG) the composition is skewed to gly residues. A compositionally biased stretch (pro residues) spans 1216-1227 (MGPPGPPGPRGP). Low complexity-rich tracts occupy residues 1240–1249 (PGSIGSVGVV) and 1282–1296 (AGPPGAAGPAGIKGP). Residues 1341 to 1360 (QPGPPGPSGEAGPPGPPGKR) are compositionally biased toward pro residues. Composition is skewed to low complexity over residues 1383–1392 (AEGPPGKTGP) and 1417–1426 (QGLPGAAGQD). 2 Collagen-like domains span residues 1427–1482 (GPPG…SPGA) and 1481–1539 (GAKG…PPGE). Pro residues predominate over residues 1428–1437 (PPGPLGPPGL). An Allysine modification is found at Lys1450. Residues 1453–1462 (PGLIGLIGPP) show a composition bias toward low complexity. The span at 1481–1490 (GAKGDGGIPG) shows a compositional bias: gly residues. The span at 1491–1507 (PAGPIGPPGPPGLPGPA) shows a compositional bias: pro residues. A compositionally biased stretch (low complexity) spans 1509–1519 (PKGNKGSSGPT). Residues 1528-1537 (PGPPGPPGPP) are compositionally biased toward pro residues. Residues 1541–1561 (IQPLPILSPKKTRRHTESIQG) are nonhelical region (C-terminal). A propeptide spans 1562–1804 (DAGDNILDYS…FEVGPACFLG (243 aa)) (C-terminal propeptide). Residues 1575 to 1803 (EEIFGSLNSL…GFEVGPACFL (229 aa)) enclose the Fibrillar collagen NC1 domain. A disulfide bridge links Cys1605 with Cys1637. Ca(2+) contacts are provided by Asp1623, Asn1625, Gln1626, Cys1628, and Asp1631. A glycan (N-linked (GlcNAc...) asparagine) is linked at Asn1638. 2 cysteine pairs are disulfide-bonded: Cys1646–Cys1801 and Cys1712–Cys1755.

This sequence belongs to the fibrillar collagen family. As to quaternary structure, trimers composed of three different chains: alpha 1(XI), alpha 2(XI), and alpha 3(XI). Alpha 3(XI) is a post-translational modification of alpha 1(II). Alpha 1(V) can also be found instead of alpha 3(XI)=1(II). Post-translationally, prolines at the third position of the tripeptide repeating unit (G-X-Y) are hydroxylated in some or all of the chains. N-glycosylated.

The protein localises to the secreted. It localises to the extracellular space. It is found in the extracellular matrix. Functionally, may play an important role in fibrillogenesis by controlling lateral growth of collagen II fibrils. The protein is Collagen alpha-1(XI) chain (Col11a1) of Mus musculus (Mouse).